The primary structure comprises 195 residues: Large ribosomal subunit protein uL18 (195 aa).

It belongs to the universal ribosomal protein uL18 family. Part of the 50S ribosomal subunit. Contacts the 5S and 23S rRNAs.

This is one of the proteins that bind and probably mediate the attachment of the 5S RNA into the large ribosomal subunit, where it forms part of the central protuberance. This chain is Large ribosomal subunit protein uL18, found in Nanoarchaeum equitans (strain Kin4-M).